A 428-amino-acid polypeptide reads, in one-letter code: Enolase (428 aa).

Gln163 contacts (2R)-2-phosphoglycerate. Glu205 (proton donor) is an active-site residue. 3 residues coordinate Mg(2+): Asp242, Glu286, and Asp313. Lys338, Arg367, Ser368, and Lys389 together coordinate (2R)-2-phosphoglycerate. The active-site Proton acceptor is Lys338.

It belongs to the enolase family. Mg(2+) is required as a cofactor.

Its subcellular location is the cytoplasm. The protein resides in the secreted. The protein localises to the cell surface. It carries out the reaction (2R)-2-phosphoglycerate = phosphoenolpyruvate + H2O. It participates in carbohydrate degradation; glycolysis; pyruvate from D-glyceraldehyde 3-phosphate: step 4/5. In terms of biological role, catalyzes the reversible conversion of 2-phosphoglycerate (2-PG) into phosphoenolpyruvate (PEP). It is essential for the degradation of carbohydrates via glycolysis. The sequence is that of Enolase from Lactobacillus helveticus (strain DPC 4571).